We begin with the raw amino-acid sequence, 559 residues long: MEKSTMSVILFVLHLLVLHLQYSEVHSLANTSAHDFSYLKFVYNATDTSLEGSYDYIVIGGGTSGCPLAATLSEKYKVLLLERGTIATEYPNTLTADGFAYNLQQQDDGKTPVERFVSEDGIDNVRARILGGTTIINAGVYARANISFYSQTGIEWDLDLVNKTYEWVEDAIVVKPNNQSWQSVIGEGFLEAGILPDNGFSLDHEAGTRLTGSTFDNNGTRHAADELLNKGDPNNLLVAVQASVEKILFSSNTSNLSAIGVIYTDSDGNSHQAFVRGNGEVIVSAGTIGTPQLLLLSGVGPESYLSSLNITVVQPNPYVGQFLYNNPRNFINNFPPNPIEASVVTVLGIRSDYYQVSLSSLPFSTPPFSLFPTTSYPLPNSTFAHIVSQVPGPLSHGSVTLNSSSDVRIAPNIKFNYYSNSTDLANCVSGMKKLGDLLRTKALEPYKARDVLGIDGFNYLGVPLPENQTDDASFETFCLDNVASYWHYHGGSLVGKVLDDSFRVMGIKALRVVDASTFPYEPNSHPQGFYLMLGRYVGLQILQERSIRLEAIHNIQESM.

An N-terminal signal peptide occupies residues 1 to 27 (MEKSTMSVILFVLHLLVLHLQYSEVHS). Residues N30 and N44 are each glycosylated (N-linked (GlcNAc...) asparagine). FAD is bound by residues 63 to 64 (TS), 82 to 83 (ER), T133, and 137 to 140 (NAGV). N145, N162, N178, and N218 each carry an N-linked (GlcNAc...) asparagine glycan. V244 contributes to the FAD binding site. 7 N-linked (GlcNAc...) asparagine glycosylation sites follow: N252, N255, N309, N380, N402, N420, and N467. The cysteines at positions 427 and 478 are disulfide-linked. Y485 contacts substrate. 486 to 487 (WH) contributes to the FAD binding site. The active-site Proton donor is the H487. H525 serves as the catalytic Proton acceptor. An FAD-binding site is contributed by 526–527 (PQ).

The protein belongs to the GMC oxidoreductase family. In terms of assembly, monomer. FAD is required as a cofactor.

It carries out the reaction (R)-mandelonitrile = benzaldehyde + hydrogen cyanide. Involved in cyanogenesis, the release of HCN from injured tissues. Catalyzes the stereospecific addition of HCN to a variety of aldehydes in vitro. It is a major seed constituent, and could have the additional role of a storage form for reduced nitrogen. This Prunus dulcis (Almond) protein is (R)-mandelonitrile lyase 1 (MDL1).